Here is a 372-residue protein sequence, read N- to C-terminus: Cytochrome b (372 aa).

The next 4 membrane-spanning stretches (helical) occupy residues Phe-25 to Ile-45, Trp-69 to Ile-90, Trp-105 to Leu-125, and Phe-170 to Ile-190. Heme b is bound by residues His-75 and His-89. His-174 and His-188 together coordinate heme b. His-193 is a binding site for a ubiquinone. A run of 4 helical transmembrane segments spans residues Tyr-218–Ser-238, Leu-280–His-300, Leu-312–Ser-332, and Phe-339–Pro-358.

Belongs to the cytochrome b family. The cytochrome bc1 complex contains 3 respiratory subunits (MT-CYB, CYC1 and UQCRFS1), 2 core proteins (UQCRC1 and UQCRC2) and probably 6 low-molecular weight proteins. Heme b serves as cofactor.

The protein localises to the mitochondrion inner membrane. In terms of biological role, component of the ubiquinol-cytochrome c reductase complex (complex III or cytochrome b-c1 complex) that is part of the mitochondrial respiratory chain. The b-c1 complex mediates electron transfer from ubiquinol to cytochrome c. Contributes to the generation of a proton gradient across the mitochondrial membrane that is then used for ATP synthesis. In Naja kaouthia (Monocled cobra), this protein is Cytochrome b (MT-CYB).